Reading from the N-terminus, the 555-residue chain is L-ascorbate oxidase homolog (555 aa).

An N-terminal signal peptide occupies residues 1–23 (MRGVKLLAACLYLAAAATVVVHA). 2 Plastocyanin-like domains span residues 25–145 (DPYF…LRVN) and 158–301 (EDDY…RYEG). N-linked (GlcNAc...) asparagine glycosylation is found at N33, N61, and N110. A disulfide bridge links C103 with C539. N330, N350, and N422 each carry an N-linked (GlcNAc...) asparagine glycan. Positions 345–524 (HYGKINITRT…LYASVLSPEK (180 aa)) constitute a Plastocyanin-like 3 domain.

This sequence belongs to the multicopper oxidase family. In terms of tissue distribution, maximal expression in early binucleate microspores; declines considerably in mature trinucleate pollen.

It localises to the secreted. Functionally, probable oxidase that may be involved in pollen tube growth. This Brassica napus (Rape) protein is L-ascorbate oxidase homolog (Bp10).